The following is a 432-amino-acid chain: Selenocysteine lyase (432 aa).

Methionine 1 is modified (N-acetylmethionine). The disordered stretch occupies residues 1–20 (MDVARNGARGSVESPPNRKV). At serine 117 the chain carries Phosphoserine. Lysine 247 carries the N6-(pyridoxal phosphate)lysine modification. Cysteine 375 serves as the catalytic S-selanylcysteine intermediate.

It belongs to the class-V pyridoxal-phosphate-dependent aminotransferase family. Homodimer. The cofactor is pyridoxal 5'-phosphate.

The protein resides in the cytoplasm. It is found in the cytosol. It catalyses the reaction L-selenocysteine + AH2 = hydrogenselenide + L-alanine + A + H(+). Functionally, catalyzes the decomposition of L-selenocysteine to L-alanine and elemental selenium. In Rattus norvegicus (Rat), this protein is Selenocysteine lyase (Scly).